Consider the following 161-residue polypeptide: Myosin regulatory light chain A, smooth adductor muscle (161 aa).

Ala1 bears the Blocked amino end (Ala) mark. EF-hand domains lie at 20 to 55 (KLMQ…LGRT) and 89 to 124 (DTEE…MGDN). Asp33, Asn35, Asp37, and Asp44 together coordinate Ca(2+).

Its function is as follows. In molluscan muscle, calcium regulation is associated with myosin rather than with actin. Muscle myosin contains two types of light chains: the catalytic light chain, essential for ATPase activity, and the regulatory light chain, a calcium-binding protein responsible for Ca(2+) dependent binding and Ca(2+) dependent Mg-ATPase activity. This is Myosin regulatory light chain A, smooth adductor muscle from Mizuhopecten yessoensis (Japanese scallop).